Reading from the N-terminus, the 351-residue chain is Fe(3+) ions import ATP-binding protein FbpC (351 aa).

In terms of domain architecture, ABC transporter spans 7–237 (VELKNVTKRF…PASEFMASFM (231 aa)). 39-46 (GPSGCGKT) contributes to the ATP binding site.

Belongs to the ABC transporter superfamily. Fe(3+) ion importer (TC 3.A.1.10) family. The complex is composed of two ATP-binding proteins (FbpC), two transmembrane proteins (FbpB) and a solute-binding protein (FbpA).

It localises to the cell inner membrane. The enzyme catalyses Fe(3+)(out) + ATP + H2O = Fe(3+)(in) + ADP + phosphate + H(+). Functionally, part of the ABC transporter complex FbpABC involved in Fe(3+) ions import. Responsible for energy coupling to the transport system. This Photorhabdus laumondii subsp. laumondii (strain DSM 15139 / CIP 105565 / TT01) (Photorhabdus luminescens subsp. laumondii) protein is Fe(3+) ions import ATP-binding protein FbpC.